A 433-amino-acid chain; its full sequence is Glutamate-1-semialdehyde 2,1-aminomutase (433 aa).

Lysine 270 carries the post-translational modification N6-(pyridoxal phosphate)lysine.

It belongs to the class-III pyridoxal-phosphate-dependent aminotransferase family. HemL subfamily. As to quaternary structure, homodimer. Requires pyridoxal 5'-phosphate as cofactor.

It is found in the cytoplasm. It catalyses the reaction (S)-4-amino-5-oxopentanoate = 5-aminolevulinate. Its pathway is porphyrin-containing compound metabolism; protoporphyrin-IX biosynthesis; 5-aminolevulinate from L-glutamyl-tRNA(Glu): step 2/2. This Clostridium novyi (strain NT) protein is Glutamate-1-semialdehyde 2,1-aminomutase.